The chain runs to 490 residues: Cytochrome P450 2C1 (490 aa).

C435 lines the heme pocket.

Belongs to the cytochrome P450 family. Requires heme as cofactor.

It is found in the endoplasmic reticulum membrane. The protein resides in the microsome membrane. The enzyme catalyses an organic molecule + reduced [NADPH--hemoprotein reductase] + O2 = an alcohol + oxidized [NADPH--hemoprotein reductase] + H2O + H(+). Functionally, cytochromes P450 are a group of heme-thiolate monooxygenases. In liver microsomes, this enzyme is involved in an NADPH-dependent electron transport pathway. It oxidizes a variety of structurally unrelated compounds, including steroids, fatty acids, and xenobiotics. The sequence is that of Cytochrome P450 2C1 (CYP2C1) from Oryctolagus cuniculus (Rabbit).